Reading from the N-terminus, the 78-residue chain is Neurotoxin 3FTx-LK (78 aa).

The first 21 residues, 1–21, serve as a signal peptide directing secretion; it reads MKTLLLTLVVVTIVCLDLGYT. 4 disulfides stabilise this stretch: C24/C42, C35/C60, C64/C70, and C71/C76.

As to expression, expressed by the venom gland.

It localises to the secreted. In terms of biological role, blocks both the muscle-twitch response to nerve stimulation and the response to exogenous acetylcholine. This is Neurotoxin 3FTx-LK from Bungarus fasciatus (Banded krait).